The sequence spans 504 residues: MDLVSALSLETWVLLAISLVLLYRYGTRKHELFKKQGIPGPKPLPFLGTVLNYYKGLWKFDMECYKKYGKTWGLFDGQTPLLAVTDPETIKNVLVKECFSVFTNRRDFGPVGIMSKAISISKDDEWKRYRALLSPTFTSGKLKEMFPVIEQYGDILVKYLRQKAKKGKPVTMKDVLGAYSMDVITSTSFGVNVDSLNNPEDPFVEKAKKLLRFDFFDPLLFSVVLFPFLTPVYEMLNICMFPKDSIEFFKKFVDRMKESRLDSKQKHRVDFLQLMMNSHNNSKDKVSHKALSDMEITAQSIIFIFAGYETTSSTLSFTLHSLATHPDIQKKLQDEIDEALPNKAPPTYDTVMEMEYLDMVLNETLRLYPIANRLERVCKKDVELNGVYIPKGSTVMIPSYALHHDPQHWSEPEEFQPERFSKENKGSIDPYVYLPFGNGPRNCLGMRFALMNMKLALTKIMQNFSFQPCKETQIPLKLSRQGLLQPEKPIVLKVVPRDAVITGA.

Position 443 (C443) interacts with heme.

This sequence belongs to the cytochrome P450 family. The cofactor is heme. In terms of tissue distribution, highly expressed in liver.

Its subcellular location is the endoplasmic reticulum membrane. The protein resides in the microsome membrane. The enzyme catalyses an organic molecule + reduced [NADPH--hemoprotein reductase] + O2 = an alcohol + oxidized [NADPH--hemoprotein reductase] + H2O + H(+). Functionally, catalyzes erythromycin N-demethylation, nifedipine oxidation and testosterone 6 beta-hydroxylation. The protein is Cytochrome P450 3A11 (Cyp3a11) of Mus musculus (Mouse).